A 133-amino-acid chain; its full sequence is ATP synthase epsilon chain (133 aa).

This sequence belongs to the ATPase epsilon chain family. F-type ATPases have 2 components, CF(1) - the catalytic core - and CF(0) - the membrane proton channel. CF(1) has five subunits: alpha(3), beta(3), gamma(1), delta(1), epsilon(1). CF(0) has three main subunits: a, b and c.

The protein resides in the cell membrane. Produces ATP from ADP in the presence of a proton gradient across the membrane. This chain is ATP synthase epsilon chain (atpC), found in Mycoplasma pneumoniae (strain ATCC 29342 / M129 / Subtype 1) (Mycoplasmoides pneumoniae).